The chain runs to 402 residues: Putative PDZ domain-containing protein PDZK1P1 (402 aa).

2 consecutive PDZ domains span residues 12–93 (RLCY…VDKE) and 121–206 (IVEM…VDKE). The interval 230 to 258 (GSVKEAPAPTPTSLEVSSPPDTTEEEDHK) is disordered. The span at 240–250 (PTSLEVSSPPD) shows a compositional bias: polar residues. One can recognise a PDZ 3 domain in the interval 261–341 (LCRLAKGENG…NVTLLVCGKK (81 aa)). The tract at residues 362 to 402 (DTPPDSKEGIVVESKHDSHMAKERAHSTASHSSSNSEDTEM) is disordered. A compositionally biased stretch (basic and acidic residues) spans 365–387 (PDSKEGIVVESKHDSHMAKERAH). Residues 388–402 (STASHSSSNSEDTEM) show a composition bias toward low complexity.

Belongs to the NHER family.

The chain is Putative PDZ domain-containing protein PDZK1P1 from Homo sapiens (Human).